Consider the following 695-residue polypeptide: Zinc finger SWIM domain-containing protein 3 (695 aa).

Positions 434–490 (NAPKLRRTRLPSTPPRPKKPFRICGGGDTRLPVEEVEETKADSAQSQLPQPQDQSSK) are disordered. Residues 475 to 489 (DSAQSQLPQPQDQSS) are compositionally biased toward low complexity. Residues 530–571 (VAVQLLENSHQVSKDGCSCSCSFQQCYHLPCRHILALLHTSQ) form an SWIM-type zinc finger.

The polypeptide is Zinc finger SWIM domain-containing protein 3 (Zswim3) (Mus musculus (Mouse)).